Here is a 429-residue protein sequence, read N- to C-terminus: Histidine--tRNA ligase (429 aa).

This sequence belongs to the class-II aminoacyl-tRNA synthetase family. Homodimer.

The protein localises to the cytoplasm. It catalyses the reaction tRNA(His) + L-histidine + ATP = L-histidyl-tRNA(His) + AMP + diphosphate + H(+). This is Histidine--tRNA ligase from Acidovorax ebreus (strain TPSY) (Diaphorobacter sp. (strain TPSY)).